A 392-amino-acid polypeptide reads, in one-letter code: MDLYEYQGRDLFERHGLPVLAGGVATTPEEARAIAERLGGRVVVKAQVKVGGRGKAGGVKLAEGADETVARATDILGMDIKGHTVHKVMITVTADVAEEYYFSYLLDRANRTFLCIASVAGGMDIEQVAAETPEKVVKAPIDANTGVDAAMARQIITRAGFPAEVVDQAVEVAVDLWKAFVAEDATLVEVNPLARTGQGGLLLLDAKVSLDENAAFRHPDHEALVDQAAVDPLEQAAKEKDLNYVKLDGEVGIIGNGAGLVMSTLDVVAYAGERHGGVKPANFLDIGGGASAAVMANGLEIVLSDPSVKSVFVNVFGGITACDAVANGIVQALALLEQRGEKVTRPLVVRLDGNNAEAGRAILDGANNPLIQRVDTMDGAAERAAELAAAGV.

The 228-residue stretch at 9-236 folds into the ATP-grasp domain; sequence RDLFERHGLP…QAAVDPLEQA (228 aa). Residues lysine 45, 52-54, alanine 94, and glutamate 99 each bind ATP; that span reads GRG. Residues asparagine 191 and aspartate 205 each contribute to the Mg(2+) site. Substrate-binding positions include asparagine 256 and 318-320; that span reads GIT.

The protein belongs to the succinate/malate CoA ligase beta subunit family. In terms of assembly, heterotetramer of two alpha and two beta subunits. Mg(2+) serves as cofactor.

It catalyses the reaction succinate + ATP + CoA = succinyl-CoA + ADP + phosphate. It carries out the reaction GTP + succinate + CoA = succinyl-CoA + GDP + phosphate. The protein operates within carbohydrate metabolism; tricarboxylic acid cycle; succinate from succinyl-CoA (ligase route): step 1/1. In terms of biological role, succinyl-CoA synthetase functions in the citric acid cycle (TCA), coupling the hydrolysis of succinyl-CoA to the synthesis of either ATP or GTP and thus represents the only step of substrate-level phosphorylation in the TCA. The beta subunit provides nucleotide specificity of the enzyme and binds the substrate succinate, while the binding sites for coenzyme A and phosphate are found in the alpha subunit. The sequence is that of Succinate--CoA ligase [ADP-forming] subunit beta from Salinispora arenicola (strain CNS-205).